A 379-amino-acid chain; its full sequence is 2-methylcitrate synthase (379 aa).

His187 contributes to the substrate binding site. His222 is a catalytic residue. Lys264 to Phe268 provides a ligand contact to CoA. His270 is a catalytic residue. Arg279 is a binding site for substrate. Residue Asp321 is part of the active site. Residues Arg346 and Arg365 each contribute to the substrate site.

It belongs to the citrate synthase family. Homodimer.

It carries out the reaction propanoyl-CoA + oxaloacetate + H2O = (2S,3S)-2-methylcitrate + CoA + H(+). The enzyme catalyses oxaloacetate + acetyl-CoA + H2O = citrate + CoA + H(+). It functions in the pathway organic acid metabolism; propanoate degradation. The protein operates within carbohydrate metabolism; tricarboxylic acid cycle; isocitrate from oxaloacetate: step 1/2. Functionally, involved in the catabolism of short chain fatty acids (SCFA) via the tricarboxylic acid (TCA)(acetyl degradation route) and via the 2-methylcitrate cycle I (propionate degradation route). Catalyzes the Claisen condensation of propionyl-CoA and oxaloacetate (OAA) to yield 2-methylcitrate (2-MC) and CoA. Also catalyzes the condensation of oxaloacetate with acetyl-CoA but with a lower specificity. The sequence is that of 2-methylcitrate synthase (gltA) from Antarctic bacterium DS2-3R.